Consider the following 301-residue polypeptide: Diaminopimelate epimerase (301 aa).

Substrate-binding residues include asparagine 15, glutamine 47, and asparagine 67. Cysteine 76 acts as the Proton donor in catalysis. Residues 77–78, asparagine 163, asparagine 197, and 215–216 each bind substrate; these read GN and ER. Cysteine 224 acts as the Proton acceptor in catalysis. Substrate is bound at residue 225-226; sequence GS.

Belongs to the diaminopimelate epimerase family. In terms of assembly, homodimer.

The protein resides in the cytoplasm. The catalysed reaction is (2S,6S)-2,6-diaminopimelate = meso-2,6-diaminopimelate. It functions in the pathway amino-acid biosynthesis; L-lysine biosynthesis via DAP pathway; DL-2,6-diaminopimelate from LL-2,6-diaminopimelate: step 1/1. Its function is as follows. Catalyzes the stereoinversion of LL-2,6-diaminopimelate (L,L-DAP) to meso-diaminopimelate (meso-DAP), a precursor of L-lysine and an essential component of the bacterial peptidoglycan. This chain is Diaminopimelate epimerase, found in Rhizobium etli (strain ATCC 51251 / DSM 11541 / JCM 21823 / NBRC 15573 / CFN 42).